A 901-amino-acid polypeptide reads, in one-letter code: Protein translocase subunit SecA (901 aa).

ATP is bound by residues Gln-87, 105–109, and Asp-512; that span reads GEGKT. Positions 839 to 901 are disordered; that stretch reads QMEEQRRQES…KYKQCHGRLA (63 aa). The segment covering 841 to 850 has biased composition (basic and acidic residues); sequence EEQRRQESER. Zn(2+) contacts are provided by Cys-885, Cys-887, Cys-896, and His-897. Basic residues predominate over residues 891-901; that stretch reads KKYKQCHGRLA.

This sequence belongs to the SecA family. Monomer and homodimer. Part of the essential Sec protein translocation apparatus which comprises SecA, SecYEG and auxiliary proteins SecDF-YajC and YidC. Zn(2+) serves as cofactor.

Its subcellular location is the cell inner membrane. The protein resides in the cytoplasm. The catalysed reaction is ATP + H2O + cellular proteinSide 1 = ADP + phosphate + cellular proteinSide 2.. Part of the Sec protein translocase complex. Interacts with the SecYEG preprotein conducting channel. Has a central role in coupling the hydrolysis of ATP to the transfer of proteins into and across the cell membrane, serving both as a receptor for the preprotein-SecB complex and as an ATP-driven molecular motor driving the stepwise translocation of polypeptide chains across the membrane. This is Protein translocase subunit SecA from Erwinia tasmaniensis (strain DSM 17950 / CFBP 7177 / CIP 109463 / NCPPB 4357 / Et1/99).